We begin with the raw amino-acid sequence, 358 residues long: MQKNDDLLRERRKDEHVALGVKQNEQLAPSSLEDIQLIGTSIPRYNVKDIDLTTTIVGTNVPFPLYINAMTGGSRHTKKINAELAEIAREAAIPMAVGSQSAALKNSSLIDTYKIVREINPNGMILANISPEVALQEGLRAIEMLEANALQIHINPAQELVMQEGDRSFSHWLTRIEEYVKLSPVPVVVKEVGFGMTRETVKTLADIGVQTVDLAGKGGTNFAQIENDRRRDQAYDFLLDWGISTGQALIDMQHQDAPKIAYLASGGIRNPLDIVKALALGADSVGMAGQIIYSLKKEGVTKTIEKLELWKEQLRGLFVLANAKNISELKTTPLIISGELAKWGALREIDLVKLANRK.

12-13 (RK) is a binding site for substrate. Residues 69–71 (AMT), S99, and N128 contribute to the FMN site. Residue Q158 coordinates substrate. E159 serves as a coordination point for Mg(2+). FMN is bound by residues K190, T220, 267–269 (GIR), and 288–289 (AG).

Belongs to the IPP isomerase type 2 family. As to quaternary structure, homooctamer. Dimer of tetramers. It depends on FMN as a cofactor. NADPH serves as cofactor. Mg(2+) is required as a cofactor.

It localises to the cytoplasm. It catalyses the reaction isopentenyl diphosphate = dimethylallyl diphosphate. Its function is as follows. Involved in the biosynthesis of isoprenoids. Catalyzes the 1,3-allylic rearrangement of the homoallylic substrate isopentenyl (IPP) to its allylic isomer, dimethylallyl diphosphate (DMAPP). The sequence is that of Isopentenyl-diphosphate delta-isomerase from Listeria monocytogenes serotype 4b (strain CLIP80459).